Reading from the N-terminus, the 514-residue chain is 2-isopropylmalate synthase (514 aa).

The Pyruvate carboxyltransferase domain maps to 5–268 (LIIFDTTLRD…DVGIDTSQIV (264 aa)). Mn(2+) contacts are provided by aspartate 14, histidine 202, histidine 204, and asparagine 239. Residues 395–514 (KFVSLSQHSE…KDDKVNPQRS (120 aa)) form a regulatory domain region.

This sequence belongs to the alpha-IPM synthase/homocitrate synthase family. LeuA type 1 subfamily. In terms of assembly, homodimer. Mn(2+) serves as cofactor.

It is found in the cytoplasm. It carries out the reaction 3-methyl-2-oxobutanoate + acetyl-CoA + H2O = (2S)-2-isopropylmalate + CoA + H(+). Its pathway is amino-acid biosynthesis; L-leucine biosynthesis; L-leucine from 3-methyl-2-oxobutanoate: step 1/4. Catalyzes the condensation of the acetyl group of acetyl-CoA with 3-methyl-2-oxobutanoate (2-ketoisovalerate) to form 3-carboxy-3-hydroxy-4-methylpentanoate (2-isopropylmalate). In Burkholderia lata (strain ATCC 17760 / DSM 23089 / LMG 22485 / NCIMB 9086 / R18194 / 383), this protein is 2-isopropylmalate synthase.